Reading from the N-terminus, the 409-residue chain is bZIP transcription factor 16 (409 aa).

The segment covering 1-16 (MASNEMEKSSKEKEPK) has biased composition (basic and acidic residues). 4 disordered regions span residues 1-63 (MASN…VASS), 118-236 (NGMT…LPVS), 274-327 (MHGK…LRKQ), and 362-409 (TTEN…KDST). A compositionally biased stretch (low complexity) spans 24–34 (APPSSQEPSSA). Residues 133–145 (GDAKQSEVKEKLP) show a composition bias toward basic and acidic residues. Polar residues predominate over residues 152–178 (SLGSLNMITGKNNEPGKNSGASANGAY). Positions 179–203 (SKSGESASDGSSEGSDGNSQNDSGS) are enriched in low complexity. A compositionally biased stretch (polar residues) spans 216–228 (NGGSANGPQNGSA). Residues 305–368 (ELKRQRRKQS…EELTTENTSL (64 aa)) enclose the bZIP domain. Positions 307-323 (KRQRRKQSNRESARRSR) match the Bipartite nuclear localization signal motif. Residues 307-326 (KRQRRKQSNRESARRSRLRK) form a basic motif region. Residues 314–327 (SNRESARRSRLRKQ) are compositionally biased toward basic and acidic residues. The segment at 333–368 (LAQRAEVLNEENTNLRAEINKLKSQCEELTTENTSL) is leucine-zipper. Residues 398-409 (AERKVDSYKDST) show a composition bias toward basic and acidic residues.

The protein belongs to the bZIP family. As to quaternary structure, monomer, homodimer and heterodimers with BZIP68 and GBF1/BZIP41. Heterodimers with GBF2/BZIP54 and GBF3/BZIP55. Binds DNA as monomer and forms homo- and heterodimers. The monomeric form is redox regulated. Interacts with GIP1.

The protein resides in the nucleus. In terms of biological role, transcriptional activator that binds to the G-box motif (5'-CACGTG-3') and other cis-acting elements with 5'-ACGT-3' core, such as Hex, C-box and as-1 motifs. Possesses high binding affinity to G-box, much lower affinity to Hex and C-box, and little affinity to as-1 element. G-box and G-box-like motifs are cis-acting elements defined in promoters of certain plant genes which are regulated by such diverse stimuli as light-induction or hormone control. Binds to the G-box motif 5'-CACGTG-3' of LHCB2.4 (At3g27690) promoter. May act as transcriptional repressor in light-regulated expression of LHCB2.4. Binds DNA as monomer. DNA-binding activity is redox-dependent. This Arabidopsis thaliana (Mouse-ear cress) protein is bZIP transcription factor 16.